The primary structure comprises 85 residues: Small ribosomal subunit protein uS17 (85 aa).

Belongs to the universal ribosomal protein uS17 family. In terms of assembly, part of the 30S ribosomal subunit.

In terms of biological role, one of the primary rRNA binding proteins, it binds specifically to the 5'-end of 16S ribosomal RNA. The polypeptide is Small ribosomal subunit protein uS17 (Mycoplasma capricolum subsp. capricolum (strain California kid / ATCC 27343 / NCTC 10154)).